The sequence spans 240 residues: Phosphoenolpyruvate guanylyltransferase (240 aa).

Phosphoenolpyruvate-binding residues include Thr-161, Gly-178, and Ser-181.

Belongs to the CofC family.

It carries out the reaction phosphoenolpyruvate + GTP + H(+) = enolpyruvoyl-2-diphospho-5'-guanosine + diphosphate. It participates in cofactor biosynthesis; coenzyme F420 biosynthesis. Its function is as follows. Guanylyltransferase that catalyzes the activation of phosphoenolpyruvate (PEP) as enolpyruvoyl-2-diphospho-5'-guanosine, via the condensation of PEP with GTP. It is involved in the biosynthesis of coenzyme F420, a hydride carrier cofactor. In Rhodococcus opacus (strain B4), this protein is Phosphoenolpyruvate guanylyltransferase.